The following is a 232-amino-acid chain: Cytidylate kinase (232 aa).

ATP is bound at residue 19 to 27 (GPAGVGKTT).

The protein belongs to the cytidylate kinase family. Type 1 subfamily.

The protein localises to the cytoplasm. It carries out the reaction CMP + ATP = CDP + ADP. It catalyses the reaction dCMP + ATP = dCDP + ADP. This is Cytidylate kinase from Nitratidesulfovibrio vulgaris (strain ATCC 29579 / DSM 644 / CCUG 34227 / NCIMB 8303 / VKM B-1760 / Hildenborough) (Desulfovibrio vulgaris).